A 962-amino-acid chain; its full sequence is Phosphatidylinositol 3,4,5-trisphosphate 3-phosphatase and dual-specificity protein phosphatase daf-18 (962 aa).

Residues 1–37 (MVTPPPDVPSTSTRSMARDLQENPNRQPGEPRVSEPY) form a disordered region. A Phosphatase tensin-type domain is found at 58–230 (CRTEYQNIDL…YYYHKLRERE (173 aa)). The Phosphocysteine intermediate role is filled by C169. The region spanning 234-530 (LPLRMQLIGV…GMKLHVVLRC (297 aa)) is the C2 tensin-type domain. 2 disordered regions span residues 382 to 416 (DTSIGRKNGMRRNETPMRKIDPETGNEFESPWQIV) and 689 to 731 (IENT…RLPD). Positions 392-403 (RRNETPMRKIDP) are enriched in basic and acidic residues. Residues 692-704 (TGPSTSGSSAPGT) are compositionally biased toward low complexity. The segment covering 706 to 720 (KKTEASQSDKVKPAT) has biased composition (basic and acidic residues).

It belongs to the PTEN phosphatase protein family. Interacts (via C-terminus) with vab-1 (via kinase domain); the interaction is independent of vab-1 kinase activity. Interacts with arr-1 and mpz-1; the interaction may inhibit daf-18. Interacts (via C-terminus) with daf-2 (via kinase domain). In terms of processing, phosphorylated by vab-1 on tyrosine residues which may promote daf-18 degradation. In terms of tissue distribution, expressed in embryo, larvae and in adult germline (at protein level). Expressed at equal levels in the 6 vulva precursor cells (VPCs) of L2 larvae and in the descendant cells of the induced VPCs (at protein level). Expressed in the uterus (at protein level). Expressed in the Z2/Z3 germline precursors, oocytes, several amphid neurons and weakly in the nerve cord (at protein level).

The protein localises to the perikaryon. It localises to the cell membrane. The protein resides in the cell projection. Its subcellular location is the axon. It is found in the dendrite. The protein localises to the cytoplasm. It localises to the nucleus. It catalyses the reaction a 1,2-diacyl-sn-glycero-3-phospho-(1D-myo-inositol-3,4,5-trisphosphate) + H2O = a 1,2-diacyl-sn-glycero-3-phospho-(1D-myo-inositol-4,5-bisphosphate) + phosphate. It carries out the reaction O-phospho-L-seryl-[protein] + H2O = L-seryl-[protein] + phosphate. The enzyme catalyses O-phospho-L-threonyl-[protein] + H2O = L-threonyl-[protein] + phosphate. The catalysed reaction is O-phospho-L-tyrosyl-[protein] + H2O = L-tyrosyl-[protein] + phosphate. It catalyses the reaction 1,2-dioctanoyl-sn-glycero-3-phospho-(1D-myo-inositol-3,4,5-trisphosphate) + H2O = 1,2-dioctanoyl-sn-glycero-3-phospho-(1D-myo-inositol-4,5-bisphosphate) + phosphate. It carries out the reaction 1,2-dihexadecanoyl-sn-glycero-3-phospho-(1D-myo-inositol-3,4,5-trisphosphate) + H2O = 1,2-dihexadecanoyl-sn-glycero-3-phospho-(1D-myo-inositol-4,5-bisphosphate) + phosphate. Functionally, acts as a dual-specificity protein phosphatase, dephosphorylating tyrosine-, serine- and threonine-phosphorylated proteins. Also acts as a lipid phosphatase, removing the phosphate in the D3 position of the inositol ring from phosphatidylinositol 3,4,5-trisphosphate. By dephosphorylating PtdIns(3,4,5)P3 antagonizes PtdIns(3,4,5)P3 production by age-1/PI3K and thus, negatively regulates daf-2-mediated processes including dauer formation, longevity, fat metabolism, chemotaxis towards salt, thermotolerance and axon guidance. Similarly, promotes apoptosis during embryonic development by suppressing the recruitment of the prosurvival kinases akt-1/2 to the plasma membrane. In addition, regulates Z2/Z3 germline precursor cell cycle by maintaining them arrested at the G2 stage and by controlling their growth during L1 diapause. After sperm depletion in larvae and adult hermaphrodites, promotes germline stem cell quiescence and oocyte accumulation. By dephosphorylating ephrin-like receptor vab-1 on tyrosine residues, negatively regulates oocyte maturation downstream of vab-1 and upstream of mpk-1, independently of daf-2. Plays a role in postembryonic muscle arm extensions. Required for neurite outgrowth during AIY interneuron embryonic development. Mainly independently of daf-2, negatively regulates vulva induction probably by inhibiting mpk-1 phosphorylation. Both lipid and protein phosphatase activities are required for the regulation of vulva induction. Plays a role in gonad and germline development following the L1 diapause. The sequence is that of Phosphatidylinositol 3,4,5-trisphosphate 3-phosphatase and dual-specificity protein phosphatase daf-18 from Caenorhabditis elegans.